A 489-amino-acid chain; its full sequence is MSEVRVRFAPSPTGFLHIGGLRTALYNYLYAKRNNGKFLLRIEDTDRTRYVEGAIENLLEQLKWAGLDPDEGVVLDDEGNVTEVGECGPYIQSDRVKQGLYQKYIDELIEKGYAYYCFCSKERLDQVKAQQKADGLMPKYDGLCRGISIEDAKKRIANGEEYVIRLKLPENKEITFNDAIKGKITFNTNDMDDQVLIKSDGFPTYHFAVVVDDHLMGITHIVRGDEWISSTAKHVYLYQCFGWDVPEFVHLPVVLNKSGKKLSKRNDDVAVKDFRKKGYLPEAIDNYLALVGWSSEDNQEIMSMEELKHKFDFNRVSKSGGVFDTEKLNWINRHYIKEIENEKLASMLKPYLVEDGVISEDYPEYKLIEIASLFKEELDYMAEITEKVEFLFKDYEMDDDAKEFLNYEKLDELMNALKEEIESVDEIEKEFASGVMKKVQKKTGIKGKDLWMTTRAVVTGNVHGPDLDSIMVVLGKQEVLDRINKALNR.

Residues 10–20 (PSPTGFLHIGG) carry the 'HIGH' region motif. A 'KMSKS' region motif is present at residues 261-265 (KLSKR). Lysine 264 contacts ATP.

This sequence belongs to the class-I aminoacyl-tRNA synthetase family. Glutamate--tRNA ligase type 1 subfamily. Monomer.

It is found in the cytoplasm. The catalysed reaction is tRNA(Glu) + L-glutamate + ATP = L-glutamyl-tRNA(Glu) + AMP + diphosphate. Catalyzes the attachment of glutamate to tRNA(Glu) in a two-step reaction: glutamate is first activated by ATP to form Glu-AMP and then transferred to the acceptor end of tRNA(Glu). This is Glutamate--tRNA ligase from Finegoldia magna (strain ATCC 29328 / DSM 20472 / WAL 2508) (Peptostreptococcus magnus).